A 496-amino-acid polypeptide reads, in one-letter code: Acetyl-coenzyme A carboxylase carboxyl transferase subunit beta, chloroplastic (496 aa).

Residues 229-496 (LWVQCENCYG…FFPLNKNFIK (268 aa)) form the CoA carboxyltransferase N-terminal domain. Residues Cys233, Cys236, Cys252, and Cys255 each coordinate Zn(2+). Residues 233 to 255 (CENCYGLNYKKFFRLKLHICEQC) form a C4-type zinc finger.

This sequence belongs to the AccD/PCCB family. In terms of assembly, acetyl-CoA carboxylase is a heterohexamer composed of biotin carboxyl carrier protein, biotin carboxylase and 2 subunits each of ACCase subunit alpha and ACCase plastid-coded subunit beta (accD). The cofactor is Zn(2+).

The protein resides in the plastid. It localises to the chloroplast stroma. The enzyme catalyses N(6)-carboxybiotinyl-L-lysyl-[protein] + acetyl-CoA = N(6)-biotinyl-L-lysyl-[protein] + malonyl-CoA. The protein operates within lipid metabolism; malonyl-CoA biosynthesis; malonyl-CoA from acetyl-CoA: step 1/1. Functionally, component of the acetyl coenzyme A carboxylase (ACC) complex. Biotin carboxylase (BC) catalyzes the carboxylation of biotin on its carrier protein (BCCP) and then the CO(2) group is transferred by the transcarboxylase to acetyl-CoA to form malonyl-CoA. This chain is Acetyl-coenzyme A carboxylase carboxyl transferase subunit beta, chloroplastic, found in Ranunculus macranthus (Large buttercup).